The following is a 288-amino-acid chain: uncharacterized protein (288 aa).

Residues 6 to 20 (GFIGLGVMGKSMASH) and threonine 97 contribute to the NAD(+) site. The active site involves lysine 172. Lysine 240 is a binding site for NAD(+).

It belongs to the HIBADH-related family.

It is found in the cell membrane. It localises to the membrane raft. This is an uncharacterized protein from Bacillus subtilis (strain 168).